Consider the following 179-residue polypeptide: Apoptosis regulator Bcl-2 homolog (179 aa).

A BH1 motif is present at residues 76-95; the sequence is ELFKDLINWGRICGFIVFSA. The short motif at 126–141 is the BH2 element; the sequence is PWMISHGGQEEFLAFS.

It belongs to the Bcl-2 family. In terms of assembly, interacts with host BECN1 (via BH3 homology domain); this interaction allows the virus to inhibit BECN1, and thus autophagy. Interacts with host BID. Interacts with host BAX.

Its subcellular location is the host mitochondrion. The protein localises to the host endoplasmic reticulum. Functionally, suppresses apoptosis in host cell to promote the viral replication. Has the ability to potentially bind to all the members of the proapoptotic Bcl-2 family. Inhibits autophagy by interacting with host Beclin 1 (BECN1). The chain is Apoptosis regulator Bcl-2 homolog from African swine fever virus (isolate Pig/Kenya/KEN-50/1950) (ASFV).